Here is a 50-residue protein sequence, read N- to C-terminus: Tubulin alpha chain (50 aa).

Asparagine 28 provides a ligand contact to GTP. The active site involves glutamate 40.

The protein belongs to the tubulin family. In terms of assembly, dimer of alpha and beta chains. A typical microtubule is a hollow water-filled tube with an outer diameter of 25 nm and an inner diameter of 15 nM. Alpha-beta heterodimers associate head-to-tail to form protofilaments running lengthwise along the microtubule wall with the beta-tubulin subunit facing the microtubule plus end conferring a structural polarity. Microtubules usually have 13 protofilaments but different protofilament numbers can be found in some organisms and specialized cells. It depends on Mg(2+) as a cofactor.

The protein localises to the cytoplasm. It is found in the cytoskeleton. It catalyses the reaction GTP + H2O = GDP + phosphate + H(+). Tubulin is the major constituent of microtubules, a cylinder consisting of laterally associated linear protofilaments composed of alpha- and beta-tubulin heterodimers. Microtubules grow by the addition of GTP-tubulin dimers to the microtubule end, where a stabilizing cap forms. Below the cap, tubulin dimers are in GDP-bound state, owing to GTPase activity of alpha-tubulin. In Populus euphratica (Euphrates poplar), this protein is Tubulin alpha chain.